The following is a 410-amino-acid chain: Retrovirus-related Pol polyprotein from type-1 retrotransposable element R1 2 (410 aa).

The Reverse transcriptase domain maps to 1–118 (GCPQGSIGGP…SCFRYLGVNV (118 aa)). The interval 254–410 (SSVIKLERLV…RLNLELDVNG (157 aa)) is nucleic acid-binding endonuclease.

The enzyme catalyses DNA(n) + a 2'-deoxyribonucleoside 5'-triphosphate = DNA(n+1) + diphosphate. This Nasonia vitripennis (Parasitic wasp) protein is Retrovirus-related Pol polyprotein from type-1 retrotransposable element R1 2.